We begin with the raw amino-acid sequence, 291 residues long: Undecaprenyl-diphosphatase (291 aa).

8 helical membrane passes run 1-21, 48-68, 102-122, 126-146, 162-182, 203-223, 231-251, and 267-287; these read MFII…LTEF, SAFT…AWVF, LHVL…DDFI, LFSV…MIIA, ISYF…WPGF, SDFT…LSLL, IADI…GLIA, and FAIY…GFGI.

Belongs to the UppP family.

Its subcellular location is the cell membrane. The enzyme catalyses di-trans,octa-cis-undecaprenyl diphosphate + H2O = di-trans,octa-cis-undecaprenyl phosphate + phosphate + H(+). Its function is as follows. Catalyzes the dephosphorylation of undecaprenyl diphosphate (UPP). Confers resistance to bacitracin. In Staphylococcus aureus (strain COL), this protein is Undecaprenyl-diphosphatase.